The primary structure comprises 129 residues: Lysozyme C, milk isozyme (129 aa).

The region spanning 1-129 (KIFSKCELAR…LSKYLASCNL (129 aa)) is the C-type lysozyme domain. 4 disulfides stabilise this stretch: C6-C127, C30-C115, C65-C80, and C76-C94. Residues E35 and D53 contribute to the active site. 5 residues coordinate Ca(2+): K82, D85, N87, D90, and D91.

It belongs to the glycosyl hydrolase 22 family. In terms of assembly, monomer. Ca(2+) is required as a cofactor.

It catalyses the reaction Hydrolysis of (1-&gt;4)-beta-linkages between N-acetylmuramic acid and N-acetyl-D-glucosamine residues in a peptidoglycan and between N-acetyl-D-glucosamine residues in chitodextrins.. Its function is as follows. Lysozymes have primarily a bacteriolytic function; those in tissues and body fluids are associated with the monocyte-macrophage system and enhance the activity of immunoagents. The chain is Lysozyme C, milk isozyme from Canis lupus familiaris (Dog).